A 61-amino-acid chain; its full sequence is Truncated 3-beta hydroxy-5-ene steroid dehydrogenase homolog (61 aa).

Belongs to the 3-beta-HSD family.

This is Truncated 3-beta hydroxy-5-ene steroid dehydrogenase homolog from Variola virus (isolate Human/India/Ind3/1967) (VARV).